A 347-amino-acid chain; its full sequence is Phosphoribosylformylglycinamidine cyclo-ligase (347 aa).

This sequence belongs to the AIR synthase family.

The protein resides in the cytoplasm. It carries out the reaction 2-formamido-N(1)-(5-O-phospho-beta-D-ribosyl)acetamidine + ATP = 5-amino-1-(5-phospho-beta-D-ribosyl)imidazole + ADP + phosphate + H(+). It functions in the pathway purine metabolism; IMP biosynthesis via de novo pathway; 5-amino-1-(5-phospho-D-ribosyl)imidazole from N(2)-formyl-N(1)-(5-phospho-D-ribosyl)glycinamide: step 2/2. This chain is Phosphoribosylformylglycinamidine cyclo-ligase, found in Prochlorococcus marinus (strain MIT 9312).